A 537-amino-acid polypeptide reads, in one-letter code: CTP synthase (537 aa).

Residues 1–265 (MTKFIFVTGG…GKYLIKRLKL (265 aa)) are amidoligase domain. Residue Ser13 participates in CTP binding. Ser13 contributes to the UTP binding site. 14–19 (GLGKGI) contacts ATP. Tyr54 serves as a coordination point for L-glutamine. Asp71 lines the ATP pocket. Asp71 and Glu139 together coordinate Mg(2+). Residues 146–148 (DIE), 186–191 (KTKPTQ), and Lys222 contribute to the CTP site. UTP is bound by residues 186 to 191 (KTKPTQ) and Lys222. Residues 290 to 532 (EIAIVGKYVK…VRAAKEYKQE (243 aa)) form the Glutamine amidotransferase type-1 domain. Gly351 is an L-glutamine binding site. Residue Cys378 is the Nucleophile; for glutamine hydrolysis of the active site. L-glutamine is bound by residues 379–382 (FGFQ), Glu402, and Arg459. Catalysis depends on residues His505 and Glu507.

Belongs to the CTP synthase family. As to quaternary structure, homotetramer.

The catalysed reaction is UTP + L-glutamine + ATP + H2O = CTP + L-glutamate + ADP + phosphate + 2 H(+). The enzyme catalyses L-glutamine + H2O = L-glutamate + NH4(+). It carries out the reaction UTP + NH4(+) + ATP = CTP + ADP + phosphate + 2 H(+). It participates in pyrimidine metabolism; CTP biosynthesis via de novo pathway; CTP from UDP: step 2/2. With respect to regulation, allosterically activated by GTP, when glutamine is the substrate; GTP has no effect on the reaction when ammonia is the substrate. The allosteric effector GTP functions by stabilizing the protein conformation that binds the tetrahedral intermediate(s) formed during glutamine hydrolysis. Inhibited by the product CTP, via allosteric rather than competitive inhibition. Functionally, catalyzes the ATP-dependent amination of UTP to CTP with either L-glutamine or ammonia as the source of nitrogen. Regulates intracellular CTP levels through interactions with the four ribonucleotide triphosphates. The chain is CTP synthase from Pyrococcus horikoshii (strain ATCC 700860 / DSM 12428 / JCM 9974 / NBRC 100139 / OT-3).